The sequence spans 371 residues: Transaldolase (371 aa).

Lys132 participates in a covalent cross-link: Isoglutamyl lysine isopeptide (Lys-Gln) (interchain with Q-Cter in protein Pup). Lys142 functions as the Schiff-base intermediate with substrate in the catalytic mechanism.

Belongs to the transaldolase family. Type 2 subfamily.

Its subcellular location is the cytoplasm. The catalysed reaction is D-sedoheptulose 7-phosphate + D-glyceraldehyde 3-phosphate = D-erythrose 4-phosphate + beta-D-fructose 6-phosphate. Its pathway is carbohydrate degradation; pentose phosphate pathway; D-glyceraldehyde 3-phosphate and beta-D-fructose 6-phosphate from D-ribose 5-phosphate and D-xylulose 5-phosphate (non-oxidative stage): step 2/3. Transaldolase is important for the balance of metabolites in the pentose-phosphate pathway. This Mycolicibacterium smegmatis (strain ATCC 700084 / mc(2)155) (Mycobacterium smegmatis) protein is Transaldolase (tal).